The primary structure comprises 258 residues: MMNPLIIKLGGVLLDSEEALERLFSALVNYRESHQRQLVIVHGGGCVVDELMKGLNLPVKKKNGLRVTPADQIDIITGALAGTANKTLLAWAKKHQIAAVGLFLGDGDSVKVTQLDEELGHVGLAQPGSPKLINSLLENGYLPVVSSIGVTNEGQLMNVNADQAATALAATLGADLILLSDVSGILDGKGQRIAEMTAAKAEQLIEQGIITDGMIVKVNAALDAARTLGRPVDIASWRHAEQLPALFNGMPMGTRILA.

Residues 44-45 (GG), R66, and N158 each bind substrate. ATP-binding positions include 181 to 186 (DVSGIL) and 209 to 211 (IIT).

The protein belongs to the acetylglutamate kinase family. ArgB subfamily. Homodimer.

The protein resides in the cytoplasm. The catalysed reaction is N-acetyl-L-glutamate + ATP = N-acetyl-L-glutamyl 5-phosphate + ADP. The protein operates within amino-acid biosynthesis; L-arginine biosynthesis; N(2)-acetyl-L-ornithine from L-glutamate: step 2/4. In terms of biological role, catalyzes the ATP-dependent phosphorylation of N-acetyl-L-glutamate. This is Acetylglutamate kinase from Escherichia coli O6:K15:H31 (strain 536 / UPEC).